The sequence spans 209 residues: N-(5'-phosphoribosyl)anthranilate isomerase (209 aa).

The protein belongs to the TrpF family.

The catalysed reaction is N-(5-phospho-beta-D-ribosyl)anthranilate = 1-(2-carboxyphenylamino)-1-deoxy-D-ribulose 5-phosphate. It participates in amino-acid biosynthesis; L-tryptophan biosynthesis; L-tryptophan from chorismate: step 3/5. In Pyrobaculum islandicum (strain DSM 4184 / JCM 9189 / GEO3), this protein is N-(5'-phosphoribosyl)anthranilate isomerase.